A 659-amino-acid polypeptide reads, in one-letter code: Zeaxanthin epoxidase, chloroplastic (659 aa).

Residues 1 to 50 (MALLSATAPAKTRFSLFSHEEAQHPHPHALSACCGGGASGKRQRARARVA) constitute a chloroplast transit peptide. Residues 79 to 107 (RVLV…TVFE) and 357 to 370 (TFNW…LLGD) each bind FAD. The FHA domain maps to 553–607 (LSIGSRSDPSNSTASLALPLPQISENHATITCKNKAFYVTDNGSEHGTWITDNEG).

It depends on FAD as a cofactor. In terms of tissue distribution, expressed in young microspores.

It is found in the plastid. The protein resides in the chloroplast membrane. It localises to the chloroplast thylakoid membrane. The catalysed reaction is all-trans-zeaxanthin + 4 reduced [2Fe-2S]-[ferredoxin] + 2 O2 + 4 H(+) = all-trans-violaxanthin + 4 oxidized [2Fe-2S]-[ferredoxin] + 2 H2O. Its pathway is plant hormone biosynthesis; abscisate biosynthesis. Its function is as follows. Zeaxanthin epoxidase that plays an important role in the xanthophyll cycle and abscisic acid (ABA) biosynthesis. Converts zeaxanthin into antheraxanthin and subsequently violaxanthin. Required for resistance to osmotic and drought stresses, seed development and dormancy. The sequence is that of Zeaxanthin epoxidase, chloroplastic (ZEP) from Oryza sativa subsp. japonica (Rice).